A 353-amino-acid chain; its full sequence is Protein RecA (353 aa).

67-74 contributes to the ATP binding site; it reads GPESSGKT.

The protein belongs to the RecA family.

It localises to the cytoplasm. Can catalyze the hydrolysis of ATP in the presence of single-stranded DNA, the ATP-dependent uptake of single-stranded DNA by duplex DNA, and the ATP-dependent hybridization of homologous single-stranded DNAs. It interacts with LexA causing its activation and leading to its autocatalytic cleavage. This Shewanella sediminis (strain HAW-EB3) protein is Protein RecA.